We begin with the raw amino-acid sequence, 178 residues long: NADH-quinone oxidoreductase subunit B 1 (178 aa).

[4Fe-4S] cluster contacts are provided by Cys-39, Cys-40, Cys-104, and Cys-135.

This sequence belongs to the complex I 20 kDa subunit family. NDH-1 is composed of 14 different subunits. Subunits NuoB, C, D, E, F, and G constitute the peripheral sector of the complex. [4Fe-4S] cluster serves as cofactor.

The protein resides in the cell inner membrane. It catalyses the reaction a quinone + NADH + 5 H(+)(in) = a quinol + NAD(+) + 4 H(+)(out). Its function is as follows. NDH-1 shuttles electrons from NADH, via FMN and iron-sulfur (Fe-S) centers, to quinones in the respiratory chain. The immediate electron acceptor for the enzyme in this species is believed to be a menaquinone. Couples the redox reaction to proton translocation (for every two electrons transferred, four hydrogen ions are translocated across the cytoplasmic membrane), and thus conserves the redox energy in a proton gradient. This chain is NADH-quinone oxidoreductase subunit B 1, found in Cytophaga hutchinsonii (strain ATCC 33406 / DSM 1761 / CIP 103989 / NBRC 15051 / NCIMB 9469 / D465).